The sequence spans 103 residues: Sec-independent protein translocase protein TatA (103 aa).

The helical transmembrane segment at 1–21 threads the bilayer; that stretch reads MGNIFSPTHLIVILLIVLVLF. The disordered stretch occupies residues 60-103; sequence YSKTTDVRPQQSQPLSVKRAAERRKGSSSFKEGKASVAKKQRGK.

It belongs to the TatA/E family. As to quaternary structure, the Tat system comprises two distinct complexes: a TatABC complex, containing multiple copies of TatA, TatB and TatC subunits, and a separate TatA complex, containing only TatA subunits. Substrates initially bind to the TatABC complex, which probably triggers association of the separate TatA complex to form the active translocon.

The protein localises to the cell inner membrane. Its function is as follows. Part of the twin-arginine translocation (Tat) system that transports large folded proteins containing a characteristic twin-arginine motif in their signal peptide across membranes. TatA could form the protein-conducting channel of the Tat system. In Bartonella quintana (strain Toulouse) (Rochalimaea quintana), this protein is Sec-independent protein translocase protein TatA.